The chain runs to 158 residues: Transcription factor BTF3 homolog 4 (158 aa).

Lys5 carries the N6-methyllysine modification. The NAC-A/B domain occupies 33–98 (TADDKKLQSS…AEAKPITEML (66 aa)). At Thr111 the chain carries Phosphothreonine. Residues 122-158 (RQVLDSKAPKPEDIDEEDDDVPDLVENFDEASKNEAN) form a disordered region. A compositionally biased stretch (acidic residues) spans 134 to 150 (DIDEEDDDVPDLVENFD).

This sequence belongs to the NAC-beta family.

The sequence is that of Transcription factor BTF3 homolog 4 (BTF3L4) from Homo sapiens (Human).